A 215-amino-acid chain; its full sequence is SAGA complex/transcription factor TFIID complex subunit Taf10 (215 aa).

A disordered region spans residues 1-77 (MSDINNNEPA…SRERHGSNYV (77 aa)). Residues 23 to 42 (GNNSMSVDEQPETSSTNLPT) show a composition bias toward polar residues. A compositionally biased stretch (basic and acidic residues) spans 58–73 (NNEDSPKSDDSRERHG). The 146-residue stretch at 58–203 (NNEDSPKSDD…VDDLSAALNE (146 aa)) folds into the Histone-fold domain.

It belongs to the TAF10 family. In terms of assembly, component of the 1.8 MDa SAGA (Spt-Ada-Gcn5 acetyltransferase) complex, which is composed of 19 subunits tra1, spt7, taf5, ngg1/ada3, sgf73, spt20, spt8, taf12, taf6, hfi1/ada1, ubp8, gcn5, ada2, spt3, sgf29, taf10, taf9, sgf11 and sus1. The SAGA complex is composed of 4 modules, namely the HAT (histone acetyltransferase) module (gcn5, ada2, ngg1/ada3 and sgf29), the DUB (deubiquitinating) module (ubp8, sgf11, sgf73 and sus1), the core or TAF (TBP-associated factor) module (taf5, taf6, taf9, taf10 and taf12), and the Tra1 or SPT (Suppressor of Ty) module (tra1, hfi1/ada1, spt3, spt7, spt8 and spt20). The Tra1/SPT module binds activators, the core module recruits TBP (TATA-binding protein), the HAT module contains the histone H3 acetyltransferase gcn5, and the DUB module comprises the histone H2B deubiquitinase ubp8. Component of the 1.2 MDa TFIID complex, which is composed of TATA-binding protein (TBP) and the 14 TBP-associated factors (TAFs). It comprises 1 copy of each taf1, taf2, taf3, taf7, taf8, taf11, taf13, 2 copies of each taf4, taf5, taf6, taf9, taf10, taf12, and 3 copies of taf14. In TFIID, taf10 heterodimerizes with taf3 and taf8.

Its subcellular location is the nucleus. Functionally, functions as a component of both the DNA-binding general transcription initiation factor complex TFIID and the transcription coactivator SAGA complex. Binding of TFIID to a promoter (with or without TATA element) is the initial step in pre-initiation complex (PIC) formation. TFIID plays a key role in the regulation of gene expression by RNA polymerase II through different activities such as transcription activator interaction, core promoter recognition and selectivity, TFIIA and TFIIB interaction, chromatin modification (histone acetylation by TAF1), facilitation of DNA opening and initiation of transcription. SAGA acts as a general cofactor required for essentially all RNA polymerase II transcription. At the promoters, SAGA is required for transcription pre-initiation complex (PIC) recruitment. It influences RNA polymerase II transcriptional activity through different activities such as TBP interaction (via core/TAF module) and promoter selectivity, interaction with transcription activators (via Tra1/SPT module), and chromatin modification through histone acetylation (via HAT module) and deubiquitination (via DUB module). SAGA preferentially acetylates histones H3 (to form H3K9ac, H3K14ac, H3K18ac and H3K23ac) and H2B and deubiquitinates histone H2B. SAGA interacts with DNA via upstream activating sequences (UASs). The chain is SAGA complex/transcription factor TFIID complex subunit Taf10 from Schizosaccharomyces pombe (strain 972 / ATCC 24843) (Fission yeast).